Consider the following 687-residue polypeptide: Protein FAR1-RELATED SEQUENCE 1 (687 aa).

Residues 35–137 (EFYKEYANSV…VKEHNHEIFT (103 aa)) enclose the FAR1 domain. The MULE domain occupies 211-254 (KAMHGCRPRVILTKHDQMLKEAVLEVFPSSRHCFYMWDTLGQMP). The SWIM-type zinc-finger motif lies at 440–476 (FVVVWNSESSEVVCSCRLFELKGFLCRHAMIVLQMSG). Residues 540-562 (NVLNEALRKWENKSNLIQNLEES) are a coiled coil.

It belongs to the FHY3/FAR1 family. As to expression, expressed in rosette and cauline leaves, inflorescences stems, flowers and siliques.

The protein localises to the nucleus. Putative transcription activator involved in regulating light control of development. The protein is Protein FAR1-RELATED SEQUENCE 1 (FRS1) of Arabidopsis thaliana (Mouse-ear cress).